The primary structure comprises 746 residues: MEGPEIQFSEAVIDNGRFGKRVIRFETGRLAKQAAGAAMVYIDEDTALLSATTAGKHPREGFDFFPLTVDVEERMYAAGRIPGSFFRREGRPSTEAILACRLMDRPLRPAFIKGLRNEVQIVVTVLAINPDELYDVVAINASSMSTQLSGLPFSGPIGGVRVALVADEHGSQWVAFPKHSQLENSVFNMVVAGRVAGDDVAIMMVEAEATDNSWNLIKEQGATAPTEEVVSEGLEAAKPFIKALCDAQADLAARAAKPTVEFPVFLDYEDDAYAAVEAAAAEKLAAVFQIADKQERDAASDQLKDDVTSSLAGQFEGREKELSAAFRSVTKHVVRQRILKDQIRIDGRGLTDIRQLTAEVEVLPRVHGSAIFERGETQIMGVTTLNMLKMEQQIDSLSPVTRKRYMHNYNFPPYSTGETGRVGSPKRREIGHGALAERALVPVLPSREEFPYAIRQVSEALSSNGSTSMGSVCASTLSMLNAGVPLKAAVAGIAMGLVSDQVDGQTRYAALTDILGAEDAFGDMDFKVAGTSEFVTAIQLDTKLDGIPASVLAAALKQAREARLHILEVINSAIDTPDELSEFAPRVIAVKIPVDKIGEVIGPKGKMINQIQEDTGADISIEDDGTVYIGATNGPSADAARSAINAIANPQVPEIGERYLGTVVKTTTFGAFISLTPGKDGLLHISELRKIAGGKRVDNVEDVVSVGQKIQVEITKIDDRGKLSLSPVIAEEEGAENAEVAEAAAE.

The Mg(2+) site is built by Asp519 and Asp525. Residues 585 to 644 enclose the KH domain; that stretch reads PRVIAVKIPVDKIGEVIGPKGKMINQIQEDTGADISIEDDGTVYIGATNGPSADAARSAI. The 73-residue stretch at 656–728 folds into the S1 motif domain; it reads GERYLGTVVK…DRGKLSLSPV (73 aa).

The protein belongs to the polyribonucleotide nucleotidyltransferase family. Mg(2+) serves as cofactor.

Its subcellular location is the cytoplasm. It catalyses the reaction RNA(n+1) + phosphate = RNA(n) + a ribonucleoside 5'-diphosphate. Involved in mRNA degradation. Catalyzes the phosphorolysis of single-stranded polyribonucleotides processively in the 3'- to 5'-direction. The polypeptide is Polyribonucleotide nucleotidyltransferase (Arthrobacter sp. (strain FB24)).